The sequence spans 174 residues: MGKITFYEDRGFQGRCYECSSDCPNLQTYFSRCNSIRVDSGCWMLYERPNYQGYQYFLRRGDYPDYQQWMGFSDSIRSCRSIPYTSSHRIRLYERDDYRGLVSELMDDCSCIHDRFRLHEIYSMHVLEGCWVLYEMPNYRGRQYLLRPGDYRRYHDWGAMDAKVGSLRRVMDLY.

2 Beta/gamma crystallin 'Greek key' domains span residues 2–40 (GKIT…RVDS) and 41–83 (GCWM…RSIP). Residues 84–87 (YTSS) form a connecting peptide region. Beta/gamma crystallin 'Greek key' domains lie at 88 to 128 (HRIR…HVLE) and 129 to 171 (GCWV…RRVM).

The protein belongs to the beta/gamma-crystallin family.

Its function is as follows. Crystallins are the dominant structural components of the vertebrate eye lens. The polypeptide is Gamma-crystallin A (Cryga) (Mus musculus (Mouse)).